We begin with the raw amino-acid sequence, 618 residues long: Zinc finger protein 48 (618 aa).

Position 1 is an N-acetylmethionine (Met1). 2 stretches are compositionally biased toward basic and acidic residues: residues 1-22 (MERA…EPQR) and 39-51 (EFEH…DLGF). Disordered stretches follow at residues 1–51 (MERA…DLGF) and 78–109 (LWVQ…ASSD). Residue Lys87 forms a Glycyl lysine isopeptide (Lys-Gly) (interchain with G-Cter in SUMO2) linkage. 2 consecutive C2H2-type zinc fingers follow at residues 112 to 134 (AVCG…QRTH) and 140 to 162 (YKCG…QRTH). The tract at residues 157–189 (KHQRTHSGEKPYRARPPAQGPPKIPRSRIPAGE) is disordered. Lys179 participates in a covalent cross-link: Glycyl lysine isopeptide (Lys-Gly) (interchain with G-Cter in SUMO2). C2H2-type zinc fingers lie at residues 192 to 214 (TICG…QRTH) and 220 to 242 (YKCG…QRTH). A disordered region spans residues 235-271 (RIKHQRTHRGEQPPRPVVPRRQPSRAATAATQGPKAQ). Lys269 participates in a covalent cross-link: Glycyl lysine isopeptide (Lys-Gly) (interchain with G-Cter in SUMO2). 2 C2H2-type zinc fingers span residues 275-297 (YICT…QRSH) and 303-325 (FGCD…LRVH). Lys329 participates in a covalent cross-link: Glycyl lysine isopeptide (Lys-Gly) (interchain with G-Cter in SUMO2). C2H2-type zinc fingers lie at residues 331 to 353 (YLCP…LRTH) and 359 to 381 (HACP…RLTH). Positions 392–414 (YPLPALIPSPPPPPLGTSPPLTP) are enriched in pro residues. The interval 392-457 (YPLPALIPSP…DKPHKCPECG (66 aa)) is disordered. A compositionally biased stretch (low complexity) spans 415-432 (RSPSHSGEPFGLPGLEPE). A C2H2-type 9 zinc finger spans residues 451–473 (HKCPECGKGFRRSSDLVKHHRVH). A Glycyl lysine isopeptide (Lys-Gly) (interchain with G-Cter in SUMO2) cross-link involves residue Lys477. The C2H2-type 10 zinc-finger motif lies at 479 to 501 (YLCPECGKGFADSSARVKHLRTH). Positions 500-540 (THRGERARPPPPSTLLRPHNPPGPVPMAPRPRVRAQPSGPS) are disordered. The segment covering 508–528 (PPPPSTLLRPHNPPGPVPMAP) has biased composition (pro residues). C2H2-type zinc fingers lie at residues 543–565 (HVCG…RRTH) and 571–593 (YKCA…QRGH). A Glycyl lysine isopeptide (Lys-Gly) (interchain with G-Cter in SUMO2) cross-link involves residue Lys610.

Belongs to the krueppel C2H2-type zinc-finger protein family.

Its subcellular location is the nucleus. Functionally, may be involved in transcriptional regulation. The sequence is that of Zinc finger protein 48 (ZNF48) from Homo sapiens (Human).